Reading from the N-terminus, the 237-residue chain is MKSLSFLNHEFEAFPSPELALNDPNGLLAIGGDLRPERLLSAYYNGIFPWFNSDDPILWWSPDPRAVFIPGEVHISTSLRKYLKKQPWRITINHAFTDVMAGCAQPREKQSGTWITQEIQMAYRELHHTGHAHSIEVWEGERLIGGLYGLAIGQVFCGESMFHRKTNASKAAVAALQQHLLKMGFKLIDAQVMNPHLESLGAKGIKRIDFITLLRELRNNPVDPATWTTKEVILELE.

It belongs to the L/F-transferase family.

It is found in the cytoplasm. It carries out the reaction N-terminal L-lysyl-[protein] + L-leucyl-tRNA(Leu) = N-terminal L-leucyl-L-lysyl-[protein] + tRNA(Leu) + H(+). It catalyses the reaction N-terminal L-arginyl-[protein] + L-leucyl-tRNA(Leu) = N-terminal L-leucyl-L-arginyl-[protein] + tRNA(Leu) + H(+). The enzyme catalyses L-phenylalanyl-tRNA(Phe) + an N-terminal L-alpha-aminoacyl-[protein] = an N-terminal L-phenylalanyl-L-alpha-aminoacyl-[protein] + tRNA(Phe). Functionally, functions in the N-end rule pathway of protein degradation where it conjugates Leu, Phe and, less efficiently, Met from aminoacyl-tRNAs to the N-termini of proteins containing an N-terminal arginine or lysine. The chain is Leucyl/phenylalanyl-tRNA--protein transferase from Shewanella baltica (strain OS185).